The primary structure comprises 512 residues: Putative ankyrin repeat protein FPV233 (512 aa).

8 ANK repeats span residues 45–73, 77–106, 136–168, 172–201, 205–236, 238–262, 266–296, and 301–329; these read IPFI…NVNQ, DDTY…QCSV, IQDI…DINM, HGNS…NPNI, TNKS…NTDP, LSHA…SINA, YGNT…DVNA, and RNLT…DINS.

The protein is Putative ankyrin repeat protein FPV233 of Vertebrata (FPV).